The sequence spans 616 residues: Dihydroxy-acid dehydratase (616 aa).

Asp81 contributes to the Mg(2+) binding site. Residue Cys122 participates in [2Fe-2S] cluster binding. The Mg(2+) site is built by Asp123 and Lys124. Lys124 carries the post-translational modification N6-carboxylysine. [2Fe-2S] cluster is bound at residue Cys195. Residue Glu491 coordinates Mg(2+). The active-site Proton acceptor is the Ser517.

The protein belongs to the IlvD/Edd family. As to quaternary structure, homodimer. Requires [2Fe-2S] cluster as cofactor. Mg(2+) is required as a cofactor.

The enzyme catalyses (2R)-2,3-dihydroxy-3-methylbutanoate = 3-methyl-2-oxobutanoate + H2O. It carries out the reaction (2R,3R)-2,3-dihydroxy-3-methylpentanoate = (S)-3-methyl-2-oxopentanoate + H2O. It functions in the pathway amino-acid biosynthesis; L-isoleucine biosynthesis; L-isoleucine from 2-oxobutanoate: step 3/4. The protein operates within amino-acid biosynthesis; L-valine biosynthesis; L-valine from pyruvate: step 3/4. Its function is as follows. Functions in the biosynthesis of branched-chain amino acids. Catalyzes the dehydration of (2R,3R)-2,3-dihydroxy-3-methylpentanoate (2,3-dihydroxy-3-methylvalerate) into 2-oxo-3-methylpentanoate (2-oxo-3-methylvalerate) and of (2R)-2,3-dihydroxy-3-methylbutanoate (2,3-dihydroxyisovalerate) into 2-oxo-3-methylbutanoate (2-oxoisovalerate), the penultimate precursor to L-isoleucine and L-valine, respectively. The sequence is that of Dihydroxy-acid dehydratase from Salmonella schwarzengrund (strain CVM19633).